A 436-amino-acid polypeptide reads, in one-letter code: Adenylosuccinate synthetase (436 aa).

Residues 12-18 (GDEGKGK) and 40-42 (GHT) contribute to the GTP site. D13 acts as the Proton acceptor in catalysis. Residues D13 and G40 each contribute to the Mg(2+) site. IMP contacts are provided by residues 13 to 16 (DEGK), 38 to 41 (NAGH), T130, R144, Q230, T245, and R309. H41 serves as the catalytic Proton donor. 305 to 311 (TTTGRPR) contacts substrate. Residues R311, 337–339 (KLD), and 419–421 (SVG) each bind GTP.

This sequence belongs to the adenylosuccinate synthetase family. Homodimer. Mg(2+) is required as a cofactor.

It is found in the cytoplasm. The enzyme catalyses IMP + L-aspartate + GTP = N(6)-(1,2-dicarboxyethyl)-AMP + GDP + phosphate + 2 H(+). It functions in the pathway purine metabolism; AMP biosynthesis via de novo pathway; AMP from IMP: step 1/2. Its function is as follows. Plays an important role in the de novo pathway of purine nucleotide biosynthesis. Catalyzes the first committed step in the biosynthesis of AMP from IMP. In Myxococcus xanthus (strain DK1622), this protein is Adenylosuccinate synthetase.